A 279-amino-acid polypeptide reads, in one-letter code: Lysozyme-like protein 2 (279 aa).

The signal sequence occupies residues 1 to 19 (MIKLLVSFTILFVLSSARP). In terms of domain architecture, Ch-type lysozyme spans 47-265 (MGNAVDFSFP…AAAPKTEVNM (219 aa)).

It belongs to the glycosyl hydrolase 25 family. As to expression, expressed in intestine.

In terms of biological role, involved in resistance to Gram-positive bacteria P.aeruginosa or B.thuringiensis infection. The sequence is that of Lysozyme-like protein 2 from Caenorhabditis elegans.